Reading from the N-terminus, the 160-residue chain is MTDAVLELPAATFDLPLSLSGGTQTTLRAHAGHWLVIYFYPKDSTPGCTTEGLDFNALLPEFDKAGAKILGVSRDSVKSHDNFCAKQGFAFPLVSDGDEALCRAFDVIKEKNMYGKQVLGIERSTFLLSPEGQVVQAWRKVKVAGHADAVLAALKAHAKQ.

Positions 4-159 (AVLELPAATF…VLAALKAHAK (156 aa)) constitute a Thioredoxin domain. Cysteine 48 acts as the Cysteine sulfenic acid (-SOH) intermediate in catalysis. A disulfide bridge connects residues cysteine 48 and cysteine 84.

The protein belongs to the peroxiredoxin family. BCP/PrxQ subfamily. Monomer.

The catalysed reaction is a hydroperoxide + [thioredoxin]-dithiol = an alcohol + [thioredoxin]-disulfide + H2O. In terms of biological role, thiol-specific peroxidase that catalyzes the reduction of hydrogen peroxide and organic hydroperoxides to water and alcohols, respectively. Plays a role in cell protection against oxidative stress by detoxifying peroxides and as sensor of hydrogen peroxide-mediated signaling events. This is Peroxiredoxin Bcp (bcp) from Xanthomonas campestris pv. campestris (strain ATCC 33913 / DSM 3586 / NCPPB 528 / LMG 568 / P 25).